Reading from the N-terminus, the 815-residue chain is Protein-glutamine gamma-glutamyltransferase K (815 aa).

2 disordered regions span residues 1-40 (MDGPRSDVGRWGGNPWQPPTTPSPEPEPEPEPERRSRRGG) and 59-100 (DDWG…AAGD). Residues 16–25 (WQPPTTPSPE) are compositionally biased toward pro residues. Thr21 is modified (phosphothreonine). A phosphoserine mark is found at Ser23, Ser80, Ser83, Ser90, and Ser93. Residues 59 to 87 (DDWGPEPHRDRGSGSGRRRPDSRGSDSRR) are compositionally biased toward basic and acidic residues. Active-site residues include Cys375, His434, and Asp457. Ca(2+)-binding residues include Asn497, Asp499, Glu546, and Glu551. The tract at residues 795–815 (SNAGGNSPLGETIPMASRGGA) is disordered.

The protein belongs to the transglutaminase superfamily. Transglutaminase family. Interacts with PLAAT4. Ca(2+) is required as a cofactor. In terms of processing, palmitoylated. Post-translationally, the membrane anchorage region possesses a cluster of five cysteines within which fatty acid(s) may become thioester-linked. It is subject to phorbol ester-stimulated phosphorylation and is hypersensitive to proteolysis, which releases the enzyme in a soluble form. Tyrosine-phosphorylated.

It is found in the membrane. It catalyses the reaction L-glutaminyl-[protein] + L-lysyl-[protein] = [protein]-L-lysyl-N(6)-5-L-glutamyl-[protein] + NH4(+). Catalyzes the cross-linking of proteins and the conjugation of polyamines to proteins. Responsible for cross-linking epidermal proteins during formation of the stratum corneum. Involved in cell proliferation. In Canis lupus familiaris (Dog), this protein is Protein-glutamine gamma-glutamyltransferase K (TGM1).